The chain runs to 70 residues: PPF2L antigen (70 aa).

This chain is PPF2L antigen, found in Plasmodium falciparum (isolate Palo Alto / Uganda).